Consider the following 295-residue polypeptide: Acetylglutamate kinase (295 aa).

Substrate contacts are provided by residues glycine 64 to glycine 65, arginine 86, and asparagine 179.

It belongs to the acetylglutamate kinase family. ArgB subfamily.

The protein localises to the cytoplasm. The enzyme catalyses N-acetyl-L-glutamate + ATP = N-acetyl-L-glutamyl 5-phosphate + ADP. Its pathway is amino-acid biosynthesis; L-arginine biosynthesis; N(2)-acetyl-L-ornithine from L-glutamate: step 2/4. Catalyzes the ATP-dependent phosphorylation of N-acetyl-L-glutamate. In Thermosynechococcus vestitus (strain NIES-2133 / IAM M-273 / BP-1), this protein is Acetylglutamate kinase.